A 102-amino-acid chain; its full sequence is Small ribosomal subunit protein uS10 (102 aa).

It belongs to the universal ribosomal protein uS10 family. Part of the 30S ribosomal subunit.

Functionally, involved in the binding of tRNA to the ribosomes. The chain is Small ribosomal subunit protein uS10 from Chelativorans sp. (strain BNC1).